Reading from the N-terminus, the 54-residue chain is MASATFIEVILAIILPPVGVFLRYGLAVEFWICLLLTLLGYIPGIIYAVYVLVA.

A run of 2 helical transmembrane segments spans residues 2–22 and 34–54; these read ASAT…GVFL and LLLT…VLVA.

It belongs to the UPF0057 (PMP3) family.

Its subcellular location is the membrane. This chain is Low temperature-induced protein lt101.2 (LT101.2), found in Hordeum vulgare (Barley).